Reading from the N-terminus, the 382-residue chain is MDTENIADASDIRVKDASGDSDEKGNGTTTEEETVEQKEKRLAELLAAGRRALKVNDIDKASDSLSEATELSSEIYGENHENTFDSLYYYGMATLELAKEESQLLKGPGEKESGDEEQAGNSDDKTDEENGETEKEDGEESGEEEDDDDDTMKLSWEILETARCIAAAKIEALEAEQSGISAIEEWNLKLADVLVLLGEHGISDGKYTQAFEDLDRALNIQRNVLPPSSRKIAQTYILIGNACASDANYDETVQYFGKTKDVLIARQTELKHELERGVDDKEKKSEFENELKELEEMMPGVEEMIADAVHSAAQVEETKKAIKAQFEGFTQVLAKLPQEAGDQKEANDISSLVRRPAKRAVDAPTDNQAVKKEKEEEGTTSI.

The segment at 1–39 (MDTENIADASDIRVKDASGDSDEKGNGTTTEEETVEQKE) is disordered. Over residues 10-25 (SDIRVKDASGDSDEKG) the composition is skewed to basic and acidic residues. A TPR 1 repeat occupies 42 to 75 (LAELLAAGRRALKVNDIDKASDSLSEATELSSEI). Over residues 103–112 (QLLKGPGEKE) the composition is skewed to basic and acidic residues. The segment at 103–151 (QLLKGPGEKESGDEEQAGNSDDKTDEENGETEKEDGEESGEEEDDDDDT) is disordered. Acidic residues predominate over residues 125 to 150 (KTDEENGETEKEDGEESGEEEDDDDD). 2 TPR repeats span residues 191-224 (ADVLVLLGEHGISDGKYTQAFEDLDRALNIQRNV) and 233-266 (AQTYILIGNACASDANYDETVQYFGKTKDVLIAR). A coiled-coil region spans residues 264 to 304 (IARQTELKHELERGVDDKEKKSEFENELKELEEMMPGVEEM). A disordered region spans residues 337–382 (PQEAGDQKEANDISSLVRRPAKRAVDAPTDNQAVKKEKEEEGTTSI). A compositionally biased stretch (basic and acidic residues) spans 369–382 (AVKKEKEEEGTTSI).

The protein belongs to the NASP family. In terms of assembly, may interact with zinc finger protein tra-4 and histone deacetylase hda-1.

Its subcellular location is the nucleus. In terms of biological role, promotes normal hermaphrodite (XX) development, in concert with zinc finger protein tra-4 and histone deacetylase hda-1, perhaps as components of a complex. May act redundantly with nasp-2. Involved in innate immune response to B.thuringiensis strain DB27 and S.aureus bacteria. May play a role in the uptake or spreading of dsRNA. This Caenorhabditis elegans protein is Protein NASP homolog 1.